A 246-amino-acid chain; its full sequence is MQHQDVAIIIPSRLSSTRLKQKPLQLIGSITLIERVFKQVNQAGLKHTYVATDSEEIASVIKKVGGKVIFTDSAIPTGTDRTYEAFKLIPNNQNINYIVNVQGDMPFIEPSSILKIIEYLKNSEYDIVTPIVKVDRESVEASSNVTVAVDSAGTALYFSRSLIPNGAEEFLYHVGMYGFRKNALEKFVSLKPTFLEKTERLEQLRVLENGMTIGTCLVENVPISVDTEEDLKKAVKFYENISKLGL.

Belongs to the KdsB family.

It is found in the cytoplasm. It catalyses the reaction 3-deoxy-alpha-D-manno-oct-2-ulosonate + CTP = CMP-3-deoxy-beta-D-manno-octulosonate + diphosphate. It functions in the pathway nucleotide-sugar biosynthesis; CMP-3-deoxy-D-manno-octulosonate biosynthesis; CMP-3-deoxy-D-manno-octulosonate from 3-deoxy-D-manno-octulosonate and CTP: step 1/1. The protein operates within bacterial outer membrane biogenesis; lipopolysaccharide biosynthesis. Functionally, activates KDO (a required 8-carbon sugar) for incorporation into bacterial lipopolysaccharide in Gram-negative bacteria. This is 3-deoxy-manno-octulosonate cytidylyltransferase from Rickettsia massiliae (strain Mtu5).